Here is a 921-residue protein sequence, read N- to C-terminus: TRPM8 channel-associated factor 1 (921 aa).

The Peptidase M60 domain maps to 542-841 (YCWMSTGLYI…TYLQLQEAFG (300 aa)).

It belongs to the TCAF family. Interacts with TRPM8 (via N-terminus and C-terminus domains); the interaction inhibits TRPM8 channel activity. Interacts with TRPV6. As to expression, isoform 2 is expressed in the prostate and strongly expressed in cancerous prostate samples.

It is found in the cell membrane. Functionally, positively regulates the plasma membrane cation channel TRPM8 activity. Involved in the recruitment of TRPM8 to the cell surface. Promotes prostate cancer cell migration inhibition in a TRPM8-dependent manner. The polypeptide is TRPM8 channel-associated factor 1 (Homo sapiens (Human)).